We begin with the raw amino-acid sequence, 185 residues long: Ribosome-recycling factor (185 aa).

The protein belongs to the RRF family.

It localises to the cytoplasm. In terms of biological role, responsible for the release of ribosomes from messenger RNA at the termination of protein biosynthesis. May increase the efficiency of translation by recycling ribosomes from one round of translation to another. The polypeptide is Ribosome-recycling factor (Sodalis glossinidius (strain morsitans)).